A 425-amino-acid chain; its full sequence is tRNA(Met) cytidine acetate ligase (425 aa).

ATP-binding positions include 7-20 (IVEY…HLYH), Gly102, Asn165, and 190-191 (RI).

Belongs to the TmcAL family.

It is found in the cytoplasm. The catalysed reaction is cytidine(34) in elongator tRNA(Met) + acetate + ATP = N(4)-acetylcytidine(34) in elongator tRNA(Met) + AMP + diphosphate. Catalyzes the formation of N(4)-acetylcytidine (ac(4)C) at the wobble position of elongator tRNA(Met), using acetate and ATP as substrates. First activates an acetate ion to form acetyladenylate (Ac-AMP) and then transfers the acetyl group to tRNA to form ac(4)C34. In Thermosipho melanesiensis (strain DSM 12029 / CIP 104789 / BI429), this protein is tRNA(Met) cytidine acetate ligase.